The chain runs to 512 residues: NAD(P)H-quinone oxidoreductase chain 4, chloroplastic (512 aa).

14 helical membrane passes run 4 to 24 (LPWL…IPFI), 34 to 54 (WYAL…FGYH), 87 to 107 (MPLV…AWPV), 111 to 131 (AKLF…VFVS), 134 to 154 (LLLF…LLLV), 167 to 187 (FILY…TMAF), 210 to 230 (ILLY…FPLH), 241 to 261 (HYST…YALI), 273 to 293 (LIFA…AALT), 312 to 332 (MGFV…GAVL), 333 to 353 (QMIS…TTYD), 373 to 395 (TFAM…GFVA), 416 to 436 (IITF…LSML), and 462 to 482 (IFVI…PKMA).

The protein belongs to the complex I subunit 4 family.

It localises to the plastid. The protein localises to the chloroplast thylakoid membrane. The catalysed reaction is a plastoquinone + NADH + (n+1) H(+)(in) = a plastoquinol + NAD(+) + n H(+)(out). It carries out the reaction a plastoquinone + NADPH + (n+1) H(+)(in) = a plastoquinol + NADP(+) + n H(+)(out). This Chlorokybus atmophyticus (Soil alga) protein is NAD(P)H-quinone oxidoreductase chain 4, chloroplastic.